The sequence spans 78 residues: Large ribosomal subunit protein bL28 (78 aa).

This sequence belongs to the bacterial ribosomal protein bL28 family.

The protein is Large ribosomal subunit protein bL28 of Francisella tularensis subsp. holarctica (strain FTNF002-00 / FTA).